A 180-amino-acid polypeptide reads, in one-letter code: DNA-directed RNA polymerase subunit omega (180 aa).

Residues Ile100 to Ser180 form a disordered region. 2 stretches are compositionally biased toward acidic residues: residues Glu137–Thr151 and Ala159–Ser180.

It belongs to the RNA polymerase subunit omega family. As to quaternary structure, the RNAP catalytic core consists of 2 alpha, 1 beta, 1 beta' and 1 omega subunit. When a sigma factor is associated with the core the holoenzyme is formed, which can initiate transcription.

It carries out the reaction RNA(n) + a ribonucleoside 5'-triphosphate = RNA(n+1) + diphosphate. Promotes RNA polymerase assembly. Latches the N- and C-terminal regions of the beta' subunit thereby facilitating its interaction with the beta and alpha subunits. This is DNA-directed RNA polymerase subunit omega from Pelagibacter ubique (strain HTCC1062).